The chain runs to 179 residues: Casparian strip membrane protein 1 (179 aa).

Residues 1 to 17 (MKAGPLQLGVVPPANRA) lie on the Cytoplasmic side of the membrane. Residues 18-38 (IAILDFFLRPIAIVGTLASAI) traverse the membrane as a helical segment. The Extracellular segment spans residues 39–67 (AMATTNQTLPFFSQFIRFRAKFNDLPSFT). The N-linked (GlcNAc...) asparagine glycan is linked to N44. The helical transmembrane segment at 68–88 (FFVVASSIVSAYLILSLGFSI) threads the bilayer. The Cytoplasmic portion of the chain corresponds to 89-100 (LHIAKSNLVNSR). Residues 101–121 (VLLLLLDTAAMGLLMAGSAAA) form a helical membrane-spanning segment. The Extracellular portion of the chain corresponds to 122–154 (TAIVQLAHKGNNKVNWFAICQQYNSFCKRVSGS). The helical transmembrane segment at 155–175 (LIGSYAGVVVLILLILLSGVA) threads the bilayer. Over 176 to 179 (LSRR) the chain is Cytoplasmic.

It belongs to the Casparian strip membrane proteins (CASP) family. Homodimer and heterodimers.

It localises to the cell membrane. In terms of biological role, regulates membrane-cell wall junctions and localized cell wall deposition. Required for establishment of the Casparian strip membrane domain (CSD) and the subsequent formation of Casparian strips, a cell wall modification of the root endodermis that determines an apoplastic barrier between the intraorganismal apoplasm and the extraorganismal apoplasm and prevents lateral diffusion. The protein is Casparian strip membrane protein 1 of Lactuca sativa (Garden lettuce).